Reading from the N-terminus, the 237-residue chain is Concanavalin-A (237 aa).

Mn(2+) is bound by residues Glu8 and Asp10. Residues Asp10, Tyr12, Asn14, and Asp19 each coordinate Ca(2+). Tyr12 contacts a carbohydrate. Mn(2+) is bound by residues Asp19 and His24. Residue 99-100 (LY) participates in a carbohydrate binding. Position 208 (Asp208) interacts with Ca(2+). Arg228 is an a carbohydrate binding site.

Belongs to the leguminous lectin family. Homotetramer.

Functionally, glucose/D-mannose specific lectin. The protein is Concanavalin-A of Canavalia lineata (Beach bean).